The sequence spans 476 residues: Bifunctional protein HldE (476 aa).

The segment at 1 to 318 (MAQYSAEFKQ…ENAIHARPET (318 aa)) is ribokinase. 195 to 198 (NMSE) provides a ligand contact to ATP. Residue D264 is part of the active site. Positions 344–476 (MTNGCFDILH…VIEKIKLLKD (133 aa)) are cytidylyltransferase.

It in the N-terminal section; belongs to the carbohydrate kinase PfkB family. This sequence in the C-terminal section; belongs to the cytidylyltransferase family. Homodimer.

It carries out the reaction D-glycero-beta-D-manno-heptose 7-phosphate + ATP = D-glycero-beta-D-manno-heptose 1,7-bisphosphate + ADP + H(+). It catalyses the reaction D-glycero-beta-D-manno-heptose 1-phosphate + ATP + H(+) = ADP-D-glycero-beta-D-manno-heptose + diphosphate. Its pathway is nucleotide-sugar biosynthesis; ADP-L-glycero-beta-D-manno-heptose biosynthesis; ADP-L-glycero-beta-D-manno-heptose from D-glycero-beta-D-manno-heptose 7-phosphate: step 1/4. It participates in nucleotide-sugar biosynthesis; ADP-L-glycero-beta-D-manno-heptose biosynthesis; ADP-L-glycero-beta-D-manno-heptose from D-glycero-beta-D-manno-heptose 7-phosphate: step 3/4. Catalyzes the phosphorylation of D-glycero-D-manno-heptose 7-phosphate at the C-1 position to selectively form D-glycero-beta-D-manno-heptose-1,7-bisphosphate. In terms of biological role, catalyzes the ADP transfer from ATP to D-glycero-beta-D-manno-heptose 1-phosphate, yielding ADP-D-glycero-beta-D-manno-heptose. The protein is Bifunctional protein HldE of Haemophilus influenzae (strain 86-028NP).